The primary structure comprises 95 residues: Aspartyl/glutamyl-tRNA(Asn/Gln) amidotransferase subunit C (95 aa).

The protein belongs to the GatC family. In terms of assembly, heterotrimer of A, B and C subunits.

It catalyses the reaction L-glutamyl-tRNA(Gln) + L-glutamine + ATP + H2O = L-glutaminyl-tRNA(Gln) + L-glutamate + ADP + phosphate + H(+). It carries out the reaction L-aspartyl-tRNA(Asn) + L-glutamine + ATP + H2O = L-asparaginyl-tRNA(Asn) + L-glutamate + ADP + phosphate + 2 H(+). Its function is as follows. Allows the formation of correctly charged Asn-tRNA(Asn) or Gln-tRNA(Gln) through the transamidation of misacylated Asp-tRNA(Asn) or Glu-tRNA(Gln) in organisms which lack either or both of asparaginyl-tRNA or glutaminyl-tRNA synthetases. The reaction takes place in the presence of glutamine and ATP through an activated phospho-Asp-tRNA(Asn) or phospho-Glu-tRNA(Gln). The polypeptide is Aspartyl/glutamyl-tRNA(Asn/Gln) amidotransferase subunit C (Roseobacter denitrificans (strain ATCC 33942 / OCh 114) (Erythrobacter sp. (strain OCh 114))).